A 488-amino-acid chain; its full sequence is Multidrug resistance outer membrane protein MdtP (488 aa).

Residues 1–23 (MINRQLSRLLLCSILGSTTLISG) form the signal peptide. A lipid anchor (N-palmitoyl cysteine) is attached at C24. C24 is lipidated: S-diacylglycerol cysteine.

This sequence belongs to the outer membrane factor (OMF) (TC 1.B.17) family. In terms of assembly, could be part of a tripartite efflux system composed of MdtN, MdtO and MdtP.

It is found in the cell outer membrane. Could be involved in resistance to puromycin, acriflavine and tetraphenylarsonium chloride. The polypeptide is Multidrug resistance outer membrane protein MdtP (mdtP) (Escherichia coli O157:H7).